Here is a 458-residue protein sequence, read N- to C-terminus: Monomethylamine methyltransferase MtmB2 (458 aa).

Residue O202 is a non-standard amino acid, pyrrolysine.

The protein belongs to the monomethylamine methyltransferase family. Can form a complex with MtmC.

It carries out the reaction Co(I)-[methylamine-specific corrinoid protein] + methylamine + H(+) = methyl-Co(III)-[methylamine-specific corrinoid protein] + NH4(+). Its pathway is one-carbon metabolism; methanogenesis from methylamine. Functionally, catalyzes the transfer of the methyl group from monomethylamine to the corrinoid cofactor of MtmC. The sequence is that of Monomethylamine methyltransferase MtmB2 (mtmB2) from Methanosarcina acetivorans (strain ATCC 35395 / DSM 2834 / JCM 12185 / C2A).